Consider the following 546-residue polypeptide: Chaperonin GroEL (546 aa).

Residues 29 to 32 (TLGP), K50, 86 to 90 (DGTTT), G415, and D495 contribute to the ATP site.

Belongs to the chaperonin (HSP60) family. Forms a cylinder of 14 subunits composed of two heptameric rings stacked back-to-back. Interacts with the co-chaperonin GroES.

Its subcellular location is the cytoplasm. The catalysed reaction is ATP + H2O + a folded polypeptide = ADP + phosphate + an unfolded polypeptide.. Functionally, together with its co-chaperonin GroES, plays an essential role in assisting protein folding. The GroEL-GroES system forms a nano-cage that allows encapsulation of the non-native substrate proteins and provides a physical environment optimized to promote and accelerate protein folding. The polypeptide is Chaperonin GroEL (Parabacteroides distasonis (strain ATCC 8503 / DSM 20701 / CIP 104284 / JCM 5825 / NCTC 11152)).